A 397-amino-acid chain; its full sequence is MKKLTIKDIDLSNKAVIMRVDFNVPIGKDGKVSDDTRITAALPTIKYAVEKKAKVILLSHLGRPKGSFDPKYSLKPIAEHLKNISGLNVIFVPHVVGEEVKEAVKNMKVGDVLLLENTRFHPGEEKNDQELAKAWAELADIHVNDAFGTAHRAHASNVGIANFIPSVAGFLMEKEIDFLNKVTYEPDHPYVVVLGGAKVSDKIGVITNLLNKADKLLIGGAMMFTFLKAQGLKVGSSLVENDKLDLAKQILEQAKEKKVEIVLPVDAIVAQKIEAGVEKKTADLKDGIDDGWMGLDIGPKTIKVFEEALKNAKTVVWNGPMGVFEIEDFAGGTKAVAEMIAKIKGTTVIGGGDSAAAVAKFGLESAYSHVSTGGGASLEFLEGKDLPGIRSIADKKK.

Substrate-binding positions include 21-23 (DFN), Arg-37, 60-63 (HLGR), Arg-119, and Arg-152. Residues Lys-202, Gly-294, Glu-325, and 351 to 354 (GGDS) contribute to the ATP site.

Belongs to the phosphoglycerate kinase family. Monomer.

It localises to the cytoplasm. It catalyses the reaction (2R)-3-phosphoglycerate + ATP = (2R)-3-phospho-glyceroyl phosphate + ADP. Its pathway is carbohydrate degradation; glycolysis; pyruvate from D-glyceraldehyde 3-phosphate: step 2/5. The chain is Phosphoglycerate kinase from Pseudothermotoga lettingae (strain ATCC BAA-301 / DSM 14385 / NBRC 107922 / TMO) (Thermotoga lettingae).